The following is a 412-amino-acid chain: Gamma-glutamyl phosphate reductase (412 aa).

It belongs to the gamma-glutamyl phosphate reductase family.

The protein resides in the cytoplasm. The enzyme catalyses L-glutamate 5-semialdehyde + phosphate + NADP(+) = L-glutamyl 5-phosphate + NADPH + H(+). It participates in amino-acid biosynthesis; L-proline biosynthesis; L-glutamate 5-semialdehyde from L-glutamate: step 2/2. Its function is as follows. Catalyzes the NADPH-dependent reduction of L-glutamate 5-phosphate into L-glutamate 5-semialdehyde and phosphate. The product spontaneously undergoes cyclization to form 1-pyrroline-5-carboxylate. This is Gamma-glutamyl phosphate reductase from Aliarcobacter butzleri (strain RM4018) (Arcobacter butzleri).